Consider the following 487-residue polypeptide: ATP synthase subunit beta (487 aa).

ATP is bound at residue 164-171; sequence GGAGVGKT.

This sequence belongs to the ATPase alpha/beta chains family. F-type ATPases have 2 components, CF(1) - the catalytic core - and CF(0) - the membrane proton channel. CF(1) has five subunits: alpha(3), beta(3), gamma(1), delta(1), epsilon(1). CF(0) has four main subunits: a(1), b(1), b'(1) and c(9-12).

The protein resides in the cellular thylakoid membrane. It catalyses the reaction ATP + H2O + 4 H(+)(in) = ADP + phosphate + 5 H(+)(out). Produces ATP from ADP in the presence of a proton gradient across the membrane. The catalytic sites are hosted primarily by the beta subunits. In Synechococcus sp. (strain CC9605), this protein is ATP synthase subunit beta.